The following is a 24-amino-acid chain: Skin secreted peptide 1 (24 aa).

Expressed by the skin glands.

The protein resides in the secreted. This chain is Skin secreted peptide 1, found in Ascaphus truei (Coastal tailed frog).